Here is a 201-residue protein sequence, read N- to C-terminus: Small ribosomal subunit protein uS4c (201 aa).

The disordered stretch occupies residues 15–43; the sequence is LGALPGLTSKRPRPGSDLRNQSRSGKRSQ. The S4 RNA-binding domain occupies 89–150; it reads MRLDNILFRL…EQRSRALIQN (62 aa).

The protein belongs to the universal ribosomal protein uS4 family. Part of the 30S ribosomal subunit. Contacts protein S5. The interaction surface between S4 and S5 is involved in control of translational fidelity.

The protein resides in the plastid. It localises to the chloroplast. Its function is as follows. One of the primary rRNA binding proteins, it binds directly to 16S rRNA where it nucleates assembly of the body of the 30S subunit. In terms of biological role, with S5 and S12 plays an important role in translational accuracy. This chain is Small ribosomal subunit protein uS4c (rps4), found in Liriodendron tulipifera (Tuliptree).